Reading from the N-terminus, the 551-residue chain is CTP synthase (551 aa).

Residues 1-265 (MTRYLFITGG…DHIVAEKWGL (265 aa)) are amidoligase domain. Ser13 contacts CTP. Ser13 is a binding site for UTP. ATP is bound by residues 14–19 (SLGKGI) and Asp71. Residues Asp71 and Glu139 each coordinate Mg(2+). Residues 146–148 (DIE), 186–191 (KTKPTQ), and Lys222 contribute to the CTP site. Residues 186-191 (KTKPTQ) and Lys222 contribute to the UTP site. The 252-residue stretch at 290-541 (TVAMVGKYVD…LRAAIAHRDG (252 aa)) folds into the Glutamine amidotransferase type-1 domain. Residue Gly351 coordinates L-glutamine. Residue Cys378 is the Nucleophile; for glutamine hydrolysis of the active site. L-glutamine is bound by residues 379–382 (LGMQ), Glu402, and Arg469. Catalysis depends on residues His514 and Glu516.

The protein belongs to the CTP synthase family. Homotetramer.

The catalysed reaction is UTP + L-glutamine + ATP + H2O = CTP + L-glutamate + ADP + phosphate + 2 H(+). The enzyme catalyses L-glutamine + H2O = L-glutamate + NH4(+). It carries out the reaction UTP + NH4(+) + ATP = CTP + ADP + phosphate + 2 H(+). It participates in pyrimidine metabolism; CTP biosynthesis via de novo pathway; CTP from UDP: step 2/2. Its activity is regulated as follows. Allosterically activated by GTP, when glutamine is the substrate; GTP has no effect on the reaction when ammonia is the substrate. The allosteric effector GTP functions by stabilizing the protein conformation that binds the tetrahedral intermediate(s) formed during glutamine hydrolysis. Inhibited by the product CTP, via allosteric rather than competitive inhibition. Catalyzes the ATP-dependent amination of UTP to CTP with either L-glutamine or ammonia as the source of nitrogen. Regulates intracellular CTP levels through interactions with the four ribonucleotide triphosphates. The polypeptide is CTP synthase (Halorhodospira halophila (strain DSM 244 / SL1) (Ectothiorhodospira halophila (strain DSM 244 / SL1))).